A 157-amino-acid chain; its full sequence is Endoribonuclease YbeY (157 aa).

Zn(2+) contacts are provided by H118, H122, and H128.

Belongs to the endoribonuclease YbeY family. Requires Zn(2+) as cofactor.

It is found in the cytoplasm. In terms of biological role, single strand-specific metallo-endoribonuclease involved in late-stage 70S ribosome quality control and in maturation of the 3' terminus of the 16S rRNA. This Bordetella parapertussis (strain 12822 / ATCC BAA-587 / NCTC 13253) protein is Endoribonuclease YbeY.